Reading from the N-terminus, the 241-residue chain is Small ribosomal subunit protein uS3 (241 aa).

The KH type-2 domain occupies 39 to 109 (IRQHVEKNLS…QIRINVIEVS (71 aa)). Residues 215 to 241 (EQAMAAPAPTPRKKRRPQQFEDRSNEE) form a disordered region. Over residues 232–241 (QQFEDRSNEE) the composition is skewed to basic and acidic residues.

The protein belongs to the universal ribosomal protein uS3 family. As to quaternary structure, part of the 30S ribosomal subunit. Forms a tight complex with proteins S10 and S14.

Functionally, binds the lower part of the 30S subunit head. Binds mRNA in the 70S ribosome, positioning it for translation. The chain is Small ribosomal subunit protein uS3 from Crocosphaera subtropica (strain ATCC 51142 / BH68) (Cyanothece sp. (strain ATCC 51142)).